Consider the following 416-residue polypeptide: Serine hydroxymethyltransferase (416 aa).

Residues Leu119 and 123–125 (GHL) each bind (6S)-5,6,7,8-tetrahydrofolate. Residue Lys228 is modified to N6-(pyridoxal phosphate)lysine. Glu243 contacts (6S)-5,6,7,8-tetrahydrofolate.

It belongs to the SHMT family. As to quaternary structure, homodimer. Pyridoxal 5'-phosphate is required as a cofactor.

It is found in the cytoplasm. It catalyses the reaction (6R)-5,10-methylene-5,6,7,8-tetrahydrofolate + glycine + H2O = (6S)-5,6,7,8-tetrahydrofolate + L-serine. The protein operates within one-carbon metabolism; tetrahydrofolate interconversion. It functions in the pathway amino-acid biosynthesis; glycine biosynthesis; glycine from L-serine: step 1/1. Functionally, catalyzes the reversible interconversion of serine and glycine with tetrahydrofolate (THF) serving as the one-carbon carrier. This reaction serves as the major source of one-carbon groups required for the biosynthesis of purines, thymidylate, methionine, and other important biomolecules. Also exhibits THF-independent aldolase activity toward beta-hydroxyamino acids, producing glycine and aldehydes, via a retro-aldol mechanism. The sequence is that of Serine hydroxymethyltransferase from Desulforapulum autotrophicum (strain ATCC 43914 / DSM 3382 / VKM B-1955 / HRM2) (Desulfobacterium autotrophicum).